A 234-amino-acid polypeptide reads, in one-letter code: 2-C-methyl-D-erythritol 4-phosphate cytidylyltransferase (234 aa).

It belongs to the IspD/TarI cytidylyltransferase family. IspD subfamily.

It catalyses the reaction 2-C-methyl-D-erythritol 4-phosphate + CTP + H(+) = 4-CDP-2-C-methyl-D-erythritol + diphosphate. It participates in isoprenoid biosynthesis; isopentenyl diphosphate biosynthesis via DXP pathway; isopentenyl diphosphate from 1-deoxy-D-xylulose 5-phosphate: step 2/6. Its function is as follows. Catalyzes the formation of 4-diphosphocytidyl-2-C-methyl-D-erythritol from CTP and 2-C-methyl-D-erythritol 4-phosphate (MEP). This Pseudomonas aeruginosa (strain ATCC 15692 / DSM 22644 / CIP 104116 / JCM 14847 / LMG 12228 / 1C / PRS 101 / PAO1) protein is 2-C-methyl-D-erythritol 4-phosphate cytidylyltransferase.